A 718-amino-acid polypeptide reads, in one-letter code: MAFCALSFPAHISRATTPAPSDLQKSSSFSSRFYWGADLLRPSQYKVRKIQSGVYASLSESGEYHSRRPPTPLLDTINYPIHMKNLSVKELKQLSDELRSDVIFNVSNTGGHLGSSLGVVELTVALHFVFNTPQDRILWDVGHQSYPHKILTGRRDKMHTMRQTNGLAGFTKRSESEYDCFGTGHSSTTISAGLGMAVGRDLKGRKNNVVAVIGDGAMTAGQAYEAMNNAGYLDSDMIIILNDNKQVSLPTASLDGPIPPVGALSSALSRLQSNRPLRELREVAKGVTKQIGGSVHELAAKVDEYARGMISGSGSTLFEELGLYYIGPVDGHNIDDLVSILEEVKSTKTTGPVLIHCITEKGRGYPYAEKAADKYHGVAKFDPATGKQFKGTSNTQSYTTYFAEALVAEAEADKDVVAIHAAMGGGTGLNLFLRRFPTRCFDVGIAEQHAVTFAAGLACEGLKPFCAIYSSFMQRAYDQAIHDVDLQKLPVRFAMDRAGLVGADGPTHCGAFDVTFMACLPNMVVMAPSDEAELFHMVATAAAIDDRPSCFRYPRGNGIGVPLPQGNKGTPLEIGKGRVLVEGERVALLGYGTAVQSCLAAAALVEPHGLRLTVADARFCKPLDHALIRELAKNHEVLITVEEGSIGGFGSHVAQFMALDGLLDGKTKWRPIVLPDRYIDHGSPADQYVDAGLTPPHIAATVFNVLGQTREALKVMTT.

A chloroplast-targeting transit peptide spans 1–55 (MAFCALSFPAHISRATTPAPSDLQKSSSFSSRFYWGADLLRPSQYKVRKIQSGVY). Residues His143 and 184-186 (GHS) contribute to the thiamine diphosphate site. Residue Asp215 coordinates Mg(2+). Residues 216–217 (GA), Asn244, Tyr365, and Glu447 each bind thiamine diphosphate. Residue Asn244 participates in Mg(2+) binding.

The protein belongs to the transketolase family. DXPS subfamily. In terms of assembly, homodimer. The cofactor is Mg(2+). Thiamine diphosphate serves as cofactor. In terms of tissue distribution, expressed in trichomes, leaves, flowers, roots and stems.

It is found in the plastid. Its subcellular location is the chloroplast. The catalysed reaction is D-glyceraldehyde 3-phosphate + pyruvate + H(+) = 1-deoxy-D-xylulose 5-phosphate + CO2. Its pathway is metabolic intermediate biosynthesis; 1-deoxy-D-xylulose 5-phosphate biosynthesis; 1-deoxy-D-xylulose 5-phosphate from D-glyceraldehyde 3-phosphate and pyruvate: step 1/1. Catalyzes the acyloin condensation reaction between C atoms 2 and 3 of pyruvate and glyceraldehyde 3-phosphate to yield 1-deoxy-D-xylulose-5-phosphate (DXP). In Cannabis sativa (Hemp), this protein is 1-deoxy-D-xylulose-5-phosphate synthase 1, chloroplastic.